The primary structure comprises 396 residues: Polygalacturonase (396 aa).

The first 22 residues, 1–22 (MDLKFKVHFALVLLFLAHFGES), serve as a signal peptide directing secretion. N-linked (GlcNAc...) asparagine glycosylation is found at asparagine 143, asparagine 151, asparagine 174, asparagine 181, asparagine 203, and asparagine 208. PbH1 repeat units lie at residues 172–198 (CKNL…HVSR) and 199–220 (SSSV…SVGD). Aspartate 213 serves as the catalytic Proton donor. Cysteine 215 and cysteine 232 are joined by a disulfide. Residue histidine 236 is part of the active site. PbH1 repeat units follow at residues 252–273 (VVGV…RIKT), 282–303 (VNDV…VIDQ), and 316–356 (PSQV…EVGD). 2 N-linked (GlcNAc...) asparagine glycosylation sites follow: asparagine 259 and asparagine 294. The segment at 364 to 396 (KEGPAKSSCENIKPSLKGKQNPPVCTASAASSS) is disordered. An intrachain disulfide couples cysteine 372 to cysteine 388.

The protein belongs to the glycosyl hydrolase 28 family. Pollen.

Its subcellular location is the secreted. The protein localises to the cell wall. The catalysed reaction is (1,4-alpha-D-galacturonosyl)n+m + H2O = (1,4-alpha-D-galacturonosyl)n + (1,4-alpha-D-galacturonosyl)m.. In terms of biological role, may function in depolymerizing pectin during pollen development, germination, and tube growth. The chain is Polygalacturonase (PG1) from Nicotiana tabacum (Common tobacco).